The chain runs to 211 residues: Probable cytokinin riboside 5'-monophosphate phosphoribohydrolase LOGL3 (211 aa).

Residues Glu84, 102-103 (RK), 119-125 (GYGTLEE), and Thr131 contribute to the substrate site.

The protein belongs to the LOG family. In terms of tissue distribution, expressed in roots, leaves, stems, tiller buds, shoot apex, immature inflorescences and flowers.

The catalysed reaction is N(6)-(dimethylallyl)adenosine 5'-phosphate + H2O = N(6)-dimethylallyladenine + D-ribose 5-phosphate. It carries out the reaction 9-ribosyl-trans-zeatin 5'-phosphate + H2O = trans-zeatin + D-ribose 5-phosphate. Cytokinin-activating enzyme working in the direct activation pathway. Phosphoribohydrolase that converts inactive cytokinin nucleotides to the biologically active free-base forms. The polypeptide is Probable cytokinin riboside 5'-monophosphate phosphoribohydrolase LOGL3 (LOGL3) (Oryza sativa subsp. japonica (Rice)).